The sequence spans 422 residues: Telomerase-associated protein of 50 kDa (422 aa).

In terms of assembly, component of the telomerase holoenzyme complex, composed of the catalytic core (the catalytic subunit TERT, the telomerase RNA template component TER and TAP65/p65), which is associated with two heterotrimeric subcomplexes: (i) the replication protein A (RPA)-related subcomplex, composed of TEB1, RPA2/TEB2 and RPA3/TEB3 and (ii) the CST-like subcomplex, composed of TAP75/p75, TAP45/p45 and TAP19/p19. TEB1 and the CST-like subcomplex are tethered to the catalytic core by TAP50/p50.

It is found in the chromosome. The protein localises to the telomere. Its function is as follows. Tethering component of the holoenzyme telomerase ribonucleoprotein (RNP) complex. Telomerase is an essential ribonucleoprotein enzyme that copies new telomeric repeats onto chromosome ends by repetitively synthesizing the short telomere-repeat sequence 5'-TTGGGG-3' using an RNA template component TER. In the telomerase holoenzyme complex, acts as a hub that anchors the two heterotrimeric subcomplexes with the catalytic core. The sequence is that of Telomerase-associated protein of 50 kDa from Tetrahymena thermophila (strain SB210).